Reading from the N-terminus, the 186-residue chain is Putative glutathione-dependent formaldehyde-activating enzyme (186 aa).

Residues 20-166 (FSGGKLRCKC…FKSIGLETYD (147 aa)) form the CENP-V/GFA domain. 7 residues coordinate Zn(2+): Cys-27, Cys-29, Cys-48, Cys-50, Cys-53, Cys-95, and Cys-98.

Belongs to the Gfa family. It depends on Zn(2+) as a cofactor.

The catalysed reaction is S-(hydroxymethyl)glutathione = glutathione + formaldehyde. Its pathway is one-carbon metabolism; formaldehyde degradation; formate from formaldehyde (glutathione route): step 1/3. Catalyzes the condensation of formaldehyde and glutathione to S-hydroxymethylglutathione. In Fusarium vanettenii (strain ATCC MYA-4622 / CBS 123669 / FGSC 9596 / NRRL 45880 / 77-13-4) (Fusarium solani subsp. pisi), this protein is Putative glutathione-dependent formaldehyde-activating enzyme.